A 145-amino-acid polypeptide reads, in one-letter code: UPF0735 ACT domain-containing protein CKL_0858 (145 aa).

Residues 69-144 enclose the ACT domain; it reads TLGLTLAHKA…SVIKVNLAAV (76 aa).

The protein belongs to the UPF0735 family.

The sequence is that of UPF0735 ACT domain-containing protein CKL_0858 from Clostridium kluyveri (strain ATCC 8527 / DSM 555 / NBRC 12016 / NCIMB 10680 / K1).